The primary structure comprises 273 residues: Large ribosomal subunit protein uL2 (273 aa).

Residues 222 to 273 (GVAMNPVDHPMGGGEGRSSGGRHPCTPWGVPTKGYRTRKSKRSDKLIVHRRK) are disordered. Over residues 264–273 (SDKLIVHRRK) the composition is skewed to basic and acidic residues.

Belongs to the universal ribosomal protein uL2 family. As to quaternary structure, part of the 50S ribosomal subunit. Forms a bridge to the 30S subunit in the 70S ribosome.

Its function is as follows. One of the primary rRNA binding proteins. Required for association of the 30S and 50S subunits to form the 70S ribosome, for tRNA binding and peptide bond formation. It has been suggested to have peptidyltransferase activity; this is somewhat controversial. Makes several contacts with the 16S rRNA in the 70S ribosome. The chain is Large ribosomal subunit protein uL2 from Syntrophobacter fumaroxidans (strain DSM 10017 / MPOB).